Consider the following 254-residue polypeptide: Alcohol dehydrogenase 2 (254 aa).

10 to 33 (FVAGLGGIGLDTSREIVKSGPKNL) is an NAD(+) binding site. Serine 138 provides a ligand contact to substrate. The active-site Proton acceptor is the tyrosine 151.

This sequence belongs to the short-chain dehydrogenases/reductases (SDR) family. As to quaternary structure, homodimer.

It carries out the reaction a primary alcohol + NAD(+) = an aldehyde + NADH + H(+). It catalyses the reaction a secondary alcohol + NAD(+) = a ketone + NADH + H(+). The chain is Alcohol dehydrogenase 2 (Adh2) from Drosophila hydei (Fruit fly).